The chain runs to 317 residues: Acetyl-coenzyme A carboxylase carboxyl transferase subunit beta (317 aa).

The disordered stretch occupies residues 1–28 (MANNMTDTMTKPDINNDSTSLQQNGNKA). One can recognise a CoA carboxyltransferase N-terminal domain in the interval 55–317 (PSTKCSSCHS…LCSVPNVDVQ (263 aa)). The Zn(2+) site is built by C59, C62, C78, and C81. A C4-type zinc finger spans residues 59 to 81 (CSSCHSIITNTALIFNCYVCPHC).

It belongs to the AccD/PCCB family. As to quaternary structure, acetyl-CoA carboxylase is a heterohexamer composed of biotin carboxyl carrier protein (AccB), biotin carboxylase (AccC) and two subunits each of ACCase subunit alpha (AccA) and ACCase subunit beta (AccD). It depends on Zn(2+) as a cofactor.

It is found in the cytoplasm. The catalysed reaction is N(6)-carboxybiotinyl-L-lysyl-[protein] + acetyl-CoA = N(6)-biotinyl-L-lysyl-[protein] + malonyl-CoA. The protein operates within lipid metabolism; malonyl-CoA biosynthesis; malonyl-CoA from acetyl-CoA: step 1/1. Functionally, component of the acetyl coenzyme A carboxylase (ACC) complex. Biotin carboxylase (BC) catalyzes the carboxylation of biotin on its carrier protein (BCCP) and then the CO(2) group is transferred by the transcarboxylase to acetyl-CoA to form malonyl-CoA. In Psychrobacter cryohalolentis (strain ATCC BAA-1226 / DSM 17306 / VKM B-2378 / K5), this protein is Acetyl-coenzyme A carboxylase carboxyl transferase subunit beta.